A 147-amino-acid polypeptide reads, in one-letter code: UPF0178 protein Patl_1318 (147 aa).

It belongs to the UPF0178 family.

The protein is UPF0178 protein Patl_1318 of Pseudoalteromonas atlantica (strain T6c / ATCC BAA-1087).